The sequence spans 279 residues: Putative pyruvate, phosphate dikinase regulatory protein (279 aa).

153–160 serves as a coordination point for ADP; it reads GISRTSKT.

It belongs to the pyruvate, phosphate/water dikinase regulatory protein family. PDRP subfamily.

The enzyme catalyses N(tele)-phospho-L-histidyl/L-threonyl-[pyruvate, phosphate dikinase] + ADP = N(tele)-phospho-L-histidyl/O-phospho-L-threonyl-[pyruvate, phosphate dikinase] + AMP + H(+). It carries out the reaction N(tele)-phospho-L-histidyl/O-phospho-L-threonyl-[pyruvate, phosphate dikinase] + phosphate + H(+) = N(tele)-phospho-L-histidyl/L-threonyl-[pyruvate, phosphate dikinase] + diphosphate. Its function is as follows. Bifunctional serine/threonine kinase and phosphorylase involved in the regulation of the pyruvate, phosphate dikinase (PPDK) by catalyzing its phosphorylation/dephosphorylation. The chain is Putative pyruvate, phosphate dikinase regulatory protein from Brucella abortus (strain 2308).